Consider the following 241-residue polypeptide: Small ribosomal subunit protein uS2 (241 aa).

This sequence belongs to the universal ribosomal protein uS2 family.

This chain is Small ribosomal subunit protein uS2, found in Cronobacter sakazakii (strain ATCC BAA-894) (Enterobacter sakazakii).